A 456-amino-acid polypeptide reads, in one-letter code: MTTTISSNLPSQLEISPTKLLITKQPIKLRESTESPFKSMMDTFKNTIISTSPTECEESSSSTITTPSEESLSSGEESSSISDSESKIITIATLLKPSNSVQDFTPLCNGAQETEIVKISNSINLSNFIIKHLVGKGGFGKVFQVVHVDTQKVYALKVIKKNHIIAKKSVVNTLAEKDILKKISHPFIVNLHYAFQNEKKLYLVMDFVNGGQLFYHLQKEAIFSEDQVRFYMAELILALEHLHDSNIVHRDLKPENILLDSQGHCILTDFGLAKLEVKTNNETFSFAGTLEYMAPEMIQHATCGKAVDWWSIGILMYDMMIGKPPFEHKNRALMQEKIISEKAKFPKFVSSSARSLINGLLTKDPTKRLGANGAIEIKRHPFFKSIQWRKIENKEITPPFVPSTKGIDDISNFDHASLKAHQRDSFSTSPTLSSSQQAYFDGFSFVRTPVLLESQK.

The span at 50-83 (STSPTECEESSSSTITTPSEESLSSGEESSSISD) shows a compositional bias: low complexity. A disordered region spans residues 50–84 (STSPTECEESSSSTITTPSEESLSSGEESSSISDS). The region spanning 128–383 (FIIKHLVGKG…AIEIKRHPFF (256 aa)) is the Protein kinase domain. Residues 134-142 (VGKGGFGKV) and lysine 157 contribute to the ATP site. The active-site Proton acceptor is the aspartate 251. The region spanning 384-455 (KSIQWRKIEN…VRTPVLLESQ (72 aa)) is the AGC-kinase C-terminal domain.

This sequence belongs to the protein kinase superfamily. AGC Ser/Thr protein kinase family.

It catalyses the reaction L-seryl-[protein] + ATP = O-phospho-L-seryl-[protein] + ADP + H(+). The enzyme catalyses L-threonyl-[protein] + ATP = O-phospho-L-threonyl-[protein] + ADP + H(+). The sequence is that of Probable serine/threonine-protein kinase DDB_G0277449 from Dictyostelium discoideum (Social amoeba).